The primary structure comprises 251 residues: Pyrroloquinoline-quinone synthase (251 aa).

The protein belongs to the PqqC family.

It catalyses the reaction 6-(2-amino-2-carboxyethyl)-7,8-dioxo-1,2,3,4,7,8-hexahydroquinoline-2,4-dicarboxylate + 3 O2 = pyrroloquinoline quinone + 2 H2O2 + 2 H2O + H(+). It functions in the pathway cofactor biosynthesis; pyrroloquinoline quinone biosynthesis. Functionally, ring cyclization and eight-electron oxidation of 3a-(2-amino-2-carboxyethyl)-4,5-dioxo-4,5,6,7,8,9-hexahydroquinoline-7,9-dicarboxylic-acid to PQQ. The chain is Pyrroloquinoline-quinone synthase from Pseudomonas savastanoi pv. phaseolicola (strain 1448A / Race 6) (Pseudomonas syringae pv. phaseolicola (strain 1448A / Race 6)).